We begin with the raw amino-acid sequence, 332 residues long: Putative potassium channel regulatory protein sup-10 (332 aa).

The signal sequence occupies residues 1 to 18 (MRYAVFIFLIVLIDLIYC). Residues 19–301 (WNSKRSFFIP…EISERNKRPA (283 aa)) lie on the Extracellular side of the membrane. N-linked (GlcNAc...) asparagine glycans are attached at residues Asn-61, Asn-107, and Asn-166. The chain crosses the membrane as a helical span at residues 302–322 (FVLVGLTGGIAVIILAFSIFW). Topologically, residues 323–332 (GLNGSGFNKD) are cytoplasmic.

As to quaternary structure, may form a complex with sup-9 and unc-93 where sup-10 and unc-93 act as regulatory subunits of the two pore potassium channel sup-9. Sup-10 may regulate sup-9 via sup-18. In terms of tissue distribution, low levels in body-wall muscles, eight vulval muscles, intestinal muscles and anal depressor muscle.

Its subcellular location is the membrane. Its function is as follows. May contribute to coordination of muscle contraction as regulatory subunit of a nonessential potassium channel complex. The chain is Putative potassium channel regulatory protein sup-10 from Caenorhabditis elegans.